The primary structure comprises 296 residues: tRNA dimethylallyltransferase (296 aa).

Residue 11–18 participates in ATP binding; sequence GPTAVGKT. 13–18 is a binding site for substrate; it reads TAVGKT. The segment at 36 to 39 is interaction with substrate tRNA; that stretch reads DSQQ.

This sequence belongs to the IPP transferase family. Monomer. Requires Mg(2+) as cofactor.

It catalyses the reaction adenosine(37) in tRNA + dimethylallyl diphosphate = N(6)-dimethylallyladenosine(37) in tRNA + diphosphate. In terms of biological role, catalyzes the transfer of a dimethylallyl group onto the adenine at position 37 in tRNAs that read codons beginning with uridine, leading to the formation of N6-(dimethylallyl)adenosine (i(6)A). The protein is tRNA dimethylallyltransferase of Streptococcus agalactiae serotype Ia (strain ATCC 27591 / A909 / CDC SS700).